The sequence spans 466 residues: uncharacterized protein (466 aa).

It belongs to the myoviridae tail sheath protein family.

This is an uncharacterized protein from Bacillus subtilis (strain 168).